Here is a 200-residue protein sequence, read N- to C-terminus: dITP/XTP pyrophosphatase (200 aa).

Substrate is bound at residue 8-13 (SQNSSK). Positions 40 and 69 each coordinate Mg(2+). Residue Asp69 is the Proton acceptor of the active site. Substrate is bound by residues Ser70, 154-157 (FGYD), Lys177, and 182-183 (HR).

Belongs to the HAM1 NTPase family. Homodimer. Requires Mg(2+) as cofactor.

It carries out the reaction XTP + H2O = XMP + diphosphate + H(+). It catalyses the reaction dITP + H2O = dIMP + diphosphate + H(+). The catalysed reaction is ITP + H2O = IMP + diphosphate + H(+). Its function is as follows. Pyrophosphatase that catalyzes the hydrolysis of nucleoside triphosphates to their monophosphate derivatives, with a high preference for the non-canonical purine nucleotides XTP (xanthosine triphosphate), dITP (deoxyinosine triphosphate) and ITP. Seems to function as a house-cleaning enzyme that removes non-canonical purine nucleotides from the nucleotide pool, thus preventing their incorporation into DNA/RNA and avoiding chromosomal lesions. This Coxiella burnetii (strain RSA 493 / Nine Mile phase I) protein is dITP/XTP pyrophosphatase.